A 368-amino-acid chain; its full sequence is Chorismate synthase (368 aa).

NADP(+)-binding residues include R48 and R54. FMN-binding positions include R131–S133, N243–A244, G292, K307–S311, and R333.

It belongs to the chorismate synthase family. As to quaternary structure, homotetramer. It depends on FMNH2 as a cofactor.

The enzyme catalyses 5-O-(1-carboxyvinyl)-3-phosphoshikimate = chorismate + phosphate. Its pathway is metabolic intermediate biosynthesis; chorismate biosynthesis; chorismate from D-erythrose 4-phosphate and phosphoenolpyruvate: step 7/7. In terms of biological role, catalyzes the anti-1,4-elimination of the C-3 phosphate and the C-6 proR hydrogen from 5-enolpyruvylshikimate-3-phosphate (EPSP) to yield chorismate, which is the branch point compound that serves as the starting substrate for the three terminal pathways of aromatic amino acid biosynthesis. This reaction introduces a second double bond into the aromatic ring system. In Nitrobacter winogradskyi (strain ATCC 25391 / DSM 10237 / CIP 104748 / NCIMB 11846 / Nb-255), this protein is Chorismate synthase.